The chain runs to 119 residues: uncharacterized protein (119 aa).

Residues 6 to 36 (QAYLDIQGKIAEFRREIKALRVEEKAITANL) are a coiled coil. The tract at residues 95-119 (AVTGSSSNVKIRKSAPARNEEDDDG) is disordered.

This is an uncharacterized protein from Frog virus 3 (isolate Goorha) (FV-3).